Reading from the N-terminus, the 633-residue chain is Ankyrin repeat and SOCS box protein 2 (633 aa).

In terms of domain architecture, UIM spans 26–45 (SEDELVQMAIEQSLADKTRG). ANK repeat units follow at residues 102 to 131 (APVD…NLSE), 135 to 165 (EGWL…VIDQ), 169 to 198 (QEET…EPDI), 202 to 231 (SRET…DTNH), 235 to 264 (RGWT…KVEA), 268 to 297 (YGIT…DINT), 301 to 330 (DSAS…DANK), 334 to 363 (DGML…RTRV), 366 to 395 (SGIS…DVNA), 408 to 437 (RRSS…DPNR), 438 to 467 (DVIN…NIDA), and 474 to 502 (TAFP…NGEP). At S369 the chain carries Phosphoserine. In terms of domain architecture, SOCS box spans 579-633 (EDWAVIKEKAEPPRPLAHLCRLRVRKAIGKYRIKLLDTLPLPGRLIRYLKYENTQ).

The protein belongs to the ankyrin SOCS box (ASB) family. Component of a probable ECS E3 ubiquitin-protein ligase complex which contains CUL5, either RBX1 or RNF7/RBX2, Elongin BC complex (ELOB and ELOC) and ASB2. Interacts with SKP2. Through its interaction with SKP2, likely to bridge the formation of dimeric E3-ubiquitin-protein ligase complexes composed of an ECS complex and an SCF(SKP2) complex. Interacts with JAK2; the interaction targets JAK2 for Notch-mediated proteasomal degradation. Interacts with TCF3/E2A; the interaction is mediated by SKP2 and targets TCF3 for Notch-mediated proteasomal degradation. Interacts with DES. In terms of processing, monoubiquitinated.

It is found in the cytoplasm. The protein localises to the cytoskeleton. Its subcellular location is the stress fiber. It localises to the myofibril. The protein resides in the sarcomere. It is found in the z line. The protein operates within protein modification; protein ubiquitination. Functionally, substrate-recognition component of a SCF-like ECS (Elongin-Cullin-SOCS-box protein) E3 ubiquitin-protein ligase complex which mediates the ubiquitination and subsequent proteasomal degradation of target proteins. Mediates Notch-induced ubiquitination and degradation of substrates including E2A and JAK2. Required during embryonic heart development for complete heart looping. Required for cardiomyocyte differentiation. Involved in myogenic differentiation and targets filamin FLNB for proteasomal degradation but not filamin FLNA. Also targets DES for proteasomal degradation. Acts as a negative regulator of skeletal muscle mass. In Bos taurus (Bovine), this protein is Ankyrin repeat and SOCS box protein 2.